The sequence spans 689 residues: DNA ligase (689 aa).

NAD(+)-binding positions include aspartate 40–aspartate 44, serine 89–leucine 90, and glutamate 121. Residue lysine 123 is the N6-AMP-lysine intermediate of the active site. The NAD(+) site is built by arginine 144, glutamate 179, lysine 295, and lysine 319. Cysteine 413, cysteine 416, cysteine 431, and cysteine 437 together coordinate Zn(2+). Residues arginine 610–valine 689 enclose the BRCT domain.

The protein belongs to the NAD-dependent DNA ligase family. LigA subfamily. Mg(2+) serves as cofactor. The cofactor is Mn(2+).

The enzyme catalyses NAD(+) + (deoxyribonucleotide)n-3'-hydroxyl + 5'-phospho-(deoxyribonucleotide)m = (deoxyribonucleotide)n+m + AMP + beta-nicotinamide D-nucleotide.. Its function is as follows. DNA ligase that catalyzes the formation of phosphodiester linkages between 5'-phosphoryl and 3'-hydroxyl groups in double-stranded DNA using NAD as a coenzyme and as the energy source for the reaction. It is essential for DNA replication and repair of damaged DNA. This chain is DNA ligase, found in Rickettsia conorii (strain ATCC VR-613 / Malish 7).